The chain runs to 688 residues: MDKVLNREESMELMDLLGLDRSAWGNIPVMRKAYLKKCKELHPDKGGDEDKMKRMNFLYKKMEQGVKVAHQPDFGTWNSSEVPTYGTDEWESWWNTFNEKWDEDLFCHEEMFASDDENTGSQHSTPPKKKKKVEDPKDFPVDLHAFLSQAVFSNRTVASFAVYTTKEKAQILYKKLMEKYSVTFISRHGFGGHNILFFLTPHRHRVSAINNYCQKLCTFSFLICKGVNKEYLFYSALCRQPYAVVEESIQGGLKEHDFNPEEPEETKQVSWKLVTQYALETKCEDVFLLMGMYLDFQENPQQCKKCEKKDQPNHFNHHEKHYYNAQIFADSKNQKSICQQAVDTVAAKQRVDSIHMTREEMLVERFNFLLDKMDLIFGAHGNAVLEQYMAGVAWIHCLLPQMDTVIYDFLKCIVLNIPKKRYWLFKGPIDSGKTTLAAALLDLCGGKSLNVNMPLERLNFELGVGIDQFMVVFEDVKGTGAESRDLPSGHGISNLDCLRDYLDGSVKVNLERKHQNKRTQVFPPGIVTMNEYSVPRTLQARFVRQIDFRPKAYLRKSLSCSEYLLEKRILQSGMTLLLLLIWFRPVADFAAAIHERIVQWKERLDLEISMYTFSTMKANVGMGRPILDFPREEDSEAEDSGHGSSTESQSQCFSQVSEASGADTQENCTFHICKGFQCFKKPKTPPPK.

At M1 the chain carries N-acetylmethionine; by host. The J domain maps to 12-75 (ELMDLLGLDR…VKVAHQPDFG (64 aa)). Residues 105–109 (LFCHE) carry the LXCXE motif motif. 3 positions are modified to phosphoserine; by host: S114, S121, and S124. The segment at 115-135 (DDENTGSQHSTPPKKKKKVED) is disordered. T125 carries the post-translational modification Phosphothreonine; by host. Positions 126–133 (PPKKKKKV) match the Nuclear localization signal motif. The segment at residues 140–255 (PVDLHAFLSQ…EESIQGGLKE (116 aa)) is a DNA-binding region (T-ag OBD). The T-ag D1-type zinc finger occupies 266-358 (TKQVSWKLVT…QRVDSIHMTR (93 aa)). Zn(2+)-binding residues include C303, C306, H314, and H318. Positions 401–561 (QMDTVIYDFL…AYLRKSLSCS (161 aa)) constitute an SF3 helicase domain. 427 to 434 (GPIDSGKT) lines the ATP pocket. The tract at residues 632–658 (EEDSEAEDSGHGSSTESQSQCFSQVSE) is disordered. The span at 642 to 658 (HGSSTESQSQCFSQVSE) shows a compositional bias: polar residues. S660 bears the Phosphoserine; by host mark. K680 is subject to N6-acetyllysine; by host. Residue T684 is modified to Phosphothreonine; by host.

In terms of assembly, forms homohexamers in the presence of ATP. Interacts with host HDAC1. Interacts (via LXCXE domain) with host RB1; the interaction induces the aberrant dissociation of RB1-E2F1 complex thereby disrupting RB1's activity. Interacts (via LXCXE domain) with host pRB-related proteins RBL1 and RBL2. Interacts (via C-terminus) with host TOP1 and POLA1 allowing DNA replication. Interacts with host TP53, inhibiting TP53 binding to DNA. Interacts with host preinitiation complex components TBP, TFIIA and TFIID to regulate transcription initiation. Requires Mg(2+) as cofactor. Phosphorylated on both serine and threonine residues. Small t antigen inhibits the dephosphorylation by the AC form of PP2A. Post-translationally, O-Glycosylated near the C-terminal region. In terms of processing, acetylated by CBP in a TP53-dependent manner.

The protein localises to the host nucleus. The enzyme catalyses Couples ATP hydrolysis with the unwinding of duplex DNA by translocating in the 3'-5' direction.. It carries out the reaction ATP + H2O = ADP + phosphate + H(+). Isoform large T antigen is a key early protein essential for both driving viral replication and inducing cellular transformation. Plays a role in viral genome replication by driving entry of quiescent cells into the cell cycle and by autoregulating the synthesis of viral early mRNA. Displays highly oncogenic activities by corrupting the host cellular checkpoint mechanisms that guard cell division and the transcription, replication, and repair of DNA. Participates in the modulation of cellular gene expression preceeding viral DNA replication. This step involves binding to host key cell cycle regulators retinoblastoma protein RB1/pRb and TP53. Induces the disassembly of host E2F1 transcription factors from RB1, thus promoting transcriptional activation of E2F1-regulated S-phase genes. Inhibits host TP53 binding to DNA, abrogating the ability of TP53 to stimulate gene expression. Plays the role of a TFIID-associated factor (TAF) in transcription initiation for all three RNA polymerases, by stabilizing the TBP-TFIIA complex on promoters. Initiates viral DNA replication and unwinding via interactions with the viral origin of replication. Binds two adjacent sites in the SV40 origin. The replication fork movement is facilitated by Large T antigen helicase activity. Has processive 3'-5' DNA helicase activity which requires a short 3' single-stranded region and ATP. Activates the transcription of viral late mRNA, through host TBP and TFIIA stabilization. Interferes with histone deacetylation mediated by HDAC1, leading to activation of transcription. The sequence is that of Large T antigen from JC polyomavirus (JCPyV).